The chain runs to 404 residues: Putative CBL-interacting protein kinase 27 (404 aa).

A Protein kinase domain is found at 11–266; sequence YEMGRVLGHG…VAGLLETPWF (256 aa). ATP-binding positions include 17-25 and Lys40; that span reads LGHGNFGRV. Asp134 (proton acceptor) is an active-site residue. Residues 152-181 form an activation loop region; the sequence is DFGLSALACHARPDGLLHTACGTPAYVAPE. In terms of domain architecture, NAF spans 294–321; the sequence is DKDEPPEVLNAFHLISLSEGFDLSPLFE. Residues 335–356 are PPI; sequence AGGTRFATREAASGVVARLEAL.

It belongs to the protein kinase superfamily. CAMK Ser/Thr protein kinase family. SNF1 subfamily. Mn(2+) serves as cofactor.

It carries out the reaction L-seryl-[protein] + ATP = O-phospho-L-seryl-[protein] + ADP + H(+). The catalysed reaction is L-threonyl-[protein] + ATP = O-phospho-L-threonyl-[protein] + ADP + H(+). Its function is as follows. CIPK serine-threonine protein kinases interact with CBL proteins. Binding of a CBL protein to the regulatory NAF domain of CIPK protein lead to the activation of the kinase in a calcium-dependent manner. The chain is Putative CBL-interacting protein kinase 27 (CIPK27) from Oryza sativa subsp. japonica (Rice).